The following is a 219-amino-acid chain: Probable GTP-binding protein EngB (219 aa).

One can recognise an EngB-type G domain in the interval 26-200 (EGVEIAFAGR…RAKLDTWFAP (175 aa)). GTP-binding positions include 34–41 (GRSNAGKS), 61–65 (GRTQL), 79–82 (DLPG), 146–149 (TKAD), and 179–181 (FSS). The Mg(2+) site is built by Ser41 and Thr63.

The protein belongs to the TRAFAC class TrmE-Era-EngA-EngB-Septin-like GTPase superfamily. EngB GTPase family. Mg(2+) is required as a cofactor.

Necessary for normal cell division and for the maintenance of normal septation. In Vibrio parahaemolyticus serotype O3:K6 (strain RIMD 2210633), this protein is Probable GTP-binding protein EngB.